A 205-amino-acid chain; its full sequence is Holliday junction branch migration complex subunit RuvA (205 aa).

The domain I stretch occupies residues 1–64 (MIGRLRGIIL…EDAQLLFGFN (64 aa)). The domain II stretch occupies residues 65–142 (DKQERALFRE…KGLSGDLFNP (78 aa)). The segment at 143–156 (VSDIPLASPASAES) is flexible linker. The domain III stretch occupies residues 157–205 (RASDPEAEAAAALVALGYKPQEASRMISKIARPEADCETLIRDALRAAL).

It belongs to the RuvA family. Homotetramer. Forms an RuvA(8)-RuvB(12)-Holliday junction (HJ) complex. HJ DNA is sandwiched between 2 RuvA tetramers; dsDNA enters through RuvA and exits via RuvB. An RuvB hexamer assembles on each DNA strand where it exits the tetramer. Each RuvB hexamer is contacted by two RuvA subunits (via domain III) on 2 adjacent RuvB subunits; this complex drives branch migration. In the full resolvosome a probable DNA-RuvA(4)-RuvB(12)-RuvC(2) complex forms which resolves the HJ.

The protein resides in the cytoplasm. Its function is as follows. The RuvA-RuvB-RuvC complex processes Holliday junction (HJ) DNA during genetic recombination and DNA repair, while the RuvA-RuvB complex plays an important role in the rescue of blocked DNA replication forks via replication fork reversal (RFR). RuvA specifically binds to HJ cruciform DNA, conferring on it an open structure. The RuvB hexamer acts as an ATP-dependent pump, pulling dsDNA into and through the RuvAB complex. HJ branch migration allows RuvC to scan DNA until it finds its consensus sequence, where it cleaves and resolves the cruciform DNA. The protein is Holliday junction branch migration complex subunit RuvA of Pectobacterium carotovorum subsp. carotovorum (strain PC1).